The chain runs to 163 residues: Regulatory protein RecX (163 aa).

The interval 1–21 (MSDAEDIPTGRKRRPREQTPV) is disordered.

The protein belongs to the RecX family.

It localises to the cytoplasm. Its function is as follows. Modulates RecA activity. This is Regulatory protein RecX from Stenotrophomonas maltophilia (strain K279a).